The sequence spans 55 residues: Large ribosomal subunit protein bL33 (55 aa).

This sequence belongs to the bacterial ribosomal protein bL33 family.

The polypeptide is Large ribosomal subunit protein bL33 (Dehalococcoides mccartyi (strain ATCC BAA-2266 / KCTC 15142 / 195) (Dehalococcoides ethenogenes (strain 195))).